The sequence spans 445 residues: Glutamate--tRNA ligase 1 (445 aa).

The short motif at 8-18 is the 'HIGH' region element; sequence PSPTGKLHVGN. Residues 239–243 carry the 'KMSKS' region motif; the sequence is KLSKR. Lys242 contacts ATP.

This sequence belongs to the class-I aminoacyl-tRNA synthetase family. Glutamate--tRNA ligase type 1 subfamily. As to quaternary structure, monomer.

The protein localises to the cytoplasm. It catalyses the reaction tRNA(Glu) + L-glutamate + ATP = L-glutamyl-tRNA(Glu) + AMP + diphosphate. Its function is as follows. Catalyzes the attachment of glutamate to tRNA(Glu) in a two-step reaction: glutamate is first activated by ATP to form Glu-AMP and then transferred to the acceptor end of tRNA(Glu). This chain is Glutamate--tRNA ligase 1, found in Maricaulis maris (strain MCS10) (Caulobacter maris).